A 576-amino-acid polypeptide reads, in one-letter code: MSFELTRRQYADLYGPTTGDSIRLADTELFLEIEKDLTVYGEEVVFGGGKVIRDGMGQNGQVTRDEDVPDTVITNAVILDYTGIYKADVAIRDGHIIKIGKAGNPQITDGVDIVIGASTEIIAGERKILTAGGVDTHIHFISPDQVPTALTSGVTTMVGGGTGPAEGTKATTVTPGKWHIQRMLQATEGMPINIGLFGKGHASAVEPLAEQIRAGAIGLKVHEDWGSTTSSIDNSLKVADEYDVQVAIHTDTLNECGFVEDTIRAIGGRVIHTFHTEGAGGGHAPDIIKIAGLPNVLPASTNPTLPYTRNTIEEHLDMLMVCHHLNPDIPEDVAFADSRIRAETIAAEDVLQDLGIFAITSSDSQAMGRVGEVITRTWQVADKMKKQRGVLKDPAGGAHGSEDSDNFRLKRYVAKYTINAAIAQGMADSIGSVEEGKFADLVLWDPAFFGVKPELVLKGGQIAYALMGDANASIPTPQPRTMRPMFAAFGKAVQQSSITFLSQAAIDAGVPEELGLQKVIRAVSGIRSLSKADLKYNDATPDIQVDPETYKVTVDGEDVTCEPADVLPMAQRYFLF.

The region spanning 132 to 576 (GGVDTHIHFI…LPMAQRYFLF (445 aa)) is the Urease domain. The Ni(2+) site is built by His-137, His-139, and Lys-220. The residue at position 220 (Lys-220) is an N6-carboxylysine. His-222 is a binding site for substrate. Residues His-249 and His-275 each coordinate Ni(2+). Catalysis depends on His-323, which acts as the Proton donor. Asp-363 contributes to the Ni(2+) binding site.

Belongs to the metallo-dependent hydrolases superfamily. Urease alpha subunit family. As to quaternary structure, heterotrimer of UreA (gamma), UreB (beta) and UreC (alpha) subunits. Three heterotrimers associate to form the active enzyme. The cofactor is Ni cation. Carboxylation allows a single lysine to coordinate two nickel ions.

Its subcellular location is the cytoplasm. It carries out the reaction urea + 2 H2O + H(+) = hydrogencarbonate + 2 NH4(+). It functions in the pathway nitrogen metabolism; urea degradation; CO(2) and NH(3) from urea (urease route): step 1/1. The polypeptide is Urease subunit alpha (Arthrobacter sp. (strain FB24)).